Reading from the N-terminus, the 232-residue chain is Dehydrin DHN3 (232 aa).

Polar residues predominate over residues 1 to 14 (MSQYQNQYGAQTGM). 2 disordered regions span residues 1 to 66 (MSQY…QHRG) and 140 to 232 (EHHG…CTGH). Over residues 49 to 60 (TTGGATGQGHGH) the composition is skewed to gly residues. Residues 140–157 (EHHGDKKGVMDKIKEKIP) show a composition bias toward basic and acidic residues. Residues 159–168 (TEQSRTNTDG) show a composition bias toward polar residues. The span at 198 to 223 (EQQDVHHGDEQHGEKKGIMEKIKEKL) shows a compositional bias: basic and acidic residues.

This sequence belongs to the plant dehydrin family.

The polypeptide is Dehydrin DHN3 (DHN3) (Pisum sativum (Garden pea)).